Reading from the N-terminus, the 162-residue chain is Phospholipase A and acyltransferase 2 (162 aa).

Residues 1-133 (MALARPRPRL…VSRSDQVTGA (133 aa)) lie on the Cytoplasmic side of the membrane. The 117-residue stretch at 13–129 (LIEISRFGYA…LRYGVSRSDQ (117 aa)) folds into the LRAT domain. Catalysis depends on residues His-23 and His-35. Cys-113 acts as the Acyl-thioester intermediate in catalysis. The helical transmembrane segment at 134 to 154 (VTTVGVAAGLLAAASLVGILL) threads the bilayer. Over 155-162 (ARSKRERQ) the chain is Lumenal.

It belongs to the H-rev107 family. In terms of tissue distribution, expressed in liver, kidney, small intestine testis and colon. Undetectable in testis, placenta, salivary gland and fetal brain.

Its subcellular location is the cytoplasm. The protein resides in the membrane. The enzyme catalyses a 1,2-diacyl-sn-glycero-3-phosphocholine + H2O = a 1-acyl-sn-glycero-3-phosphocholine + a fatty acid + H(+). It carries out the reaction a 1,2-diacyl-sn-glycero-3-phosphocholine + H2O = a 2-acyl-sn-glycero-3-phosphocholine + a fatty acid + H(+). It catalyses the reaction a 1,2-diacyl-sn-glycero-3-phosphoethanolamine + a 1,2-diacyl-sn-glycero-3-phosphocholine = an N-acyl-1,2-diacyl-sn-glycero-3-phosphoethanolamine + a 1-acyl-sn-glycero-3-phosphocholine + H(+). The catalysed reaction is a 1,2-diacyl-sn-glycero-3-phosphoethanolamine + a 1,2-diacyl-sn-glycero-3-phosphocholine = an N-acyl-1,2-diacyl-sn-glycero-3-phosphoethanolamine + a 2-acyl-sn-glycero-3-phosphocholine + H(+). The enzyme catalyses 1,2-dihexadecanoyl-sn-glycero-3-phosphocholine + H2O = 1-hexadecanoyl-sn-glycero-3-phosphocholine + hexadecanoate + H(+). It carries out the reaction 1,2-dihexadecanoyl-sn-glycero-3-phosphocholine + H2O = 2-hexadecanoyl-sn-glycero-3-phosphocholine + hexadecanoate + H(+). It catalyses the reaction 1-hexadecanoyl-2-(9Z-octadecenoyl)-sn-glycero-3-phosphocholine + H2O = 2-(9Z-octadecenoyl)-sn-glycero-3-phosphocholine + hexadecanoate + H(+). The catalysed reaction is 1-hexadecanoyl-2-(9Z-octadecenoyl)-sn-glycero-3-phosphocholine + H2O = 1-hexadecanoyl-sn-glycero-3-phosphocholine + (9Z)-octadecenoate + H(+). The enzyme catalyses 1-hexadecanoyl-2-(5Z,8Z,11Z,14Z-eicosatetraenoyl)-sn-glycero-3-phosphocholine + H2O = 2-(5Z,8Z,11Z,14Z)-eicosatetraenoyl-sn-glycero-3-phosphocholine + hexadecanoate + H(+). It carries out the reaction 1-hexadecanoyl-2-(9Z,12Z-octadecadienoyl)-sn-glycero-3-phosphoethanolamine + H2O = 1-hexadecanoyl-sn-glycero-3-phosphoethanolamine + (9Z,12Z)-octadecadienoate + H(+). It catalyses the reaction 1-hexadecanoyl-2-(9Z,12Z-octadecadienoyl)-sn-glycero-3-phosphoethanolamine + H2O = 2-(9Z,12Z)-octadecadienoyl-sn-glycero-3-phosphoethanolamine + hexadecanoate + H(+). The catalysed reaction is 1-hexadecanoyl-2-(5Z,8Z,11Z,14Z-eicosatetraenoyl)-sn-glycero-3-phosphoethanolamine + H2O = 1-hexadecanoyl-sn-glycero-3-phosphoethanolamine + (5Z,8Z,11Z,14Z)-eicosatetraenoate + H(+). The enzyme catalyses 1-hexadecanoyl-2-(5Z,8Z,11Z,14Z-eicosatetraenoyl)-sn-glycero-3-phosphoethanolamine + H2O = 2-(5Z,8Z,11Z,14Z)-eicosatetraenoyl-sn-glycero-3-phosphoethanolamine + hexadecanoate + H(+). It carries out the reaction 1,2-di-(9Z-octadecenoyl)-sn-glycero-3-phosphoethanolamine + 1,2-dihexadecanoyl-sn-glycero-3-phosphocholine = N-hexadecanoyl-1,2-di-(9Z-octadecenoyl)-sn-glycero-3-phosphoethanolamine + 2-hexadecanoyl-sn-glycero-3-phosphocholine + H(+). It catalyses the reaction 1,2-di-(9Z-octadecenoyl)-sn-glycero-3-phosphoethanolamine + 1,2-dihexadecanoyl-sn-glycero-3-phosphocholine = N-hexadecanoyl-1,2-di-(9Z-octadecenoyl)-sn-glycero-3-phosphoethanolamine + 1-hexadecanoyl-sn-glycero-3-phosphocholine + H(+). The catalysed reaction is 1-hexanoyl-2-acyl-sn-glycero-3-phosphocholine + H2O = 1-hexanoyl-sn-glycero-3-phosphocholine + a fatty acid + H(+). The enzyme catalyses 1,2-diheptadecanoyl-sn-glycero-3-phosphoethanolamine + 1-(9Z-octadecenoyl)-2-hexadecanoyl-sn-glycero-3-phosphocholine = 1,2-diheptadecanoyl-sn-glycero-3-phospho-N-hexadecanoyl-ethanolamine + 1-(9Z-octadecenoyl)-sn-glycero-3-phosphocholine + H(+). It carries out the reaction 1,2-diheptadecanoyl-sn-glycero-3-phosphoethanolamine + 1-(9Z-octadecenoyl)-2-hexadecanoyl-sn-glycero-3-phosphocholine = 1,2-diheptadecanoyl-sn-glycero-3-phospho-N-(9Z-octadecenoyl)-ethanolamine + 2-hexadecanoyl-sn-glycero-3-phosphocholine + H(+). It catalyses the reaction 1,2-dihexanoyl-sn-glycero-3-phosphocholine + 1,2-diheptanoyl-sn-glycero-3-phosphocholine = 1-heptanoyl-2-hexanoyl-sn-glycero-3-phosphocholine + 1-hexanoyl-2-heptanoyl-sn-glycero-3-phosphocholine. The catalysed reaction is 1,2-diheptanoyl-sn-glycero-3-phosphocholine + 1,2-dihexadecanoyl-sn-glycero-3-phosphocholine = 1-hexadecanoyl-2-heptanoyl-sn-glycero-3-phosphocholine + 1-heptanoyl-2-hexadecanoyl-sn-glycero-3-phosphocholine. The enzyme catalyses 1,2-dihexanoyl-sn-glycero-3-phosphoethanolamine + 1,2-diheptanoyl-sn-glycero-3-phosphocholine = 1-heptanoyl-2-hexanoyl-sn-glycero-3-phosphoethanolamine + 1-hexanoyl-2-heptanoyl-sn-glycero-3-phosphocholine. It carries out the reaction 1-hexanoyl-2-acyl-sn-glycero-3-phosphocholine + H2O = hexanoate + a 2-acyl-sn-glycero-3-phosphocholine + H(+). It catalyses the reaction 1,2-dihexanoyl-sn-glycero-3-phosphoethanolamine + 2-heptanoyl-sn-glycero-3-phosphocholine = hexanoyl-sn-glycero-3-phosphoethanolamine + 1-hexanoyl-2-heptanoyl-sn-glycero-3-phosphocholine. Functionally, exhibits both phospholipase A1/2 and acyltransferase activities. Shows phospholipase A1 (PLA1) and A2 (PLA2) activity, catalyzing the calcium-independent release of fatty acids from the sn-1 or sn-2 position of glycerophospholipids. For most substrates, PLA1 activity is much higher than PLA2 activity. Shows O-acyltransferase activity, catalyzing the transfer of a fatty acyl group from glycerophospholipid to the hydroxyl group of lysophospholipid. Shows N-acyltransferase activity, catalyzing the calcium-independent transfer of a fatty acyl group at the sn-1 position of phosphatidylcholine (PC) and other glycerophospholipids to the primary amine of phosphatidylethanolamine (PE), forming N-acylphosphatidylethanolamine (NAPE), which serves as precursor for N-acylethanolamines (NAEs). Catalyzes N-acylation of PE using both sn-1 and sn-2 palmitoyl groups of PC as acyl donor. Exhibits high phospholipase A1/2 activity and low N-acyltransferase activity. In Homo sapiens (Human), this protein is Phospholipase A and acyltransferase 2.